The following is a 143-amino-acid chain: Transcriptional regulator MraZ (143 aa).

SpoVT-AbrB domains lie at 5-47 (SHTP…PMAE) and 76-119 (AADD…DAQR).

It belongs to the MraZ family. In terms of assembly, forms oligomers.

The protein localises to the cytoplasm. It localises to the nucleoid. This Frankia alni (strain DSM 45986 / CECT 9034 / ACN14a) protein is Transcriptional regulator MraZ.